We begin with the raw amino-acid sequence, 1598 residues long: Transposon Ty2-LR2 Gag-Pol polyprotein (1598 aa).

3 stretches are compositionally biased toward polar residues: residues 1-11 (MESQQLHQNPH), 19-39 (ASVTSKEVPSNQDPLAVSASN), and 49-60 (KVNSQEETTPGT). Disordered regions lie at residues 1–88 (MESQ…YQQH) and 359–449 (QHSE…SNDE). An RNA-binding region spans residues 295 to 397 (ENNINVSDRL…SSKPRAAKAH (103 aa)). Residues 369–381 (TSPNTTNTKVTTR) show a composition bias toward low complexity. 2 stretches are compositionally biased toward polar residues: residues 399 to 408 (IATSSKFSRV) and 415 to 435 (ESTVSSQYLSDDNELSLGQQQ). The active-site For protease activity; shared with dimeric partner is D457. The segment at 579–636 (NVNKSKSVNKYPYPLIHRMLGHANFRSIQKSLKKNAVTYLKESDIEWSNASTYQCPDC) is integrase-type zinc finger-like. The Integrase catalytic domain occupies 656–831 (ESYEPFQYLH…AGLDITTILP (176 aa)). Mg(2+) is bound by residues D667 and D732. Polar residues-rich tracts occupy residues 915-927 (SFIEQNETEQSYD), 1009-1034 (ESDTTSPRHSSTFTARNQNRPGSTNE), and 1065-1082 (QRNSDTNIKYRTTNSTPS). Disordered regions lie at residues 915–934 (SFIEQNETEQSYDQNKESDH), 1004–1034 (MGGTVESDTTSPRHSSTFTARNQNRPGSTNE), 1059–1135 (TEEP…KSSK), 1146–1165 (LPLPDLTHKSPTDTSDVSKD), and 1170–1205 (HSRQTNSSLGGMDDSNVLTTTKSKKRSLEDNETEIE). The span at 1151-1165 (LTHKSPTDTSDVSKD) shows a compositional bias: basic and acidic residues. The short motif at 1193-1227 (KKRSLEDNETEIEVSRDTWNNKNMRSLEPPRSKKR) is the Bipartite nuclear localization signal element. The Reverse transcriptase Ty1/copia-type domain maps to 1353 to 1491 (NDYYITQLDI…DILGLEIKYQ (139 aa)). 3 residues coordinate Mg(2+): D1361, D1442, and D1443.

As to quaternary structure, the capsid protein forms a homotrimer, from which the VLPs are assembled. The protease is a homodimer, whose active site consists of two apposed aspartic acid residues. Post-translationally, initially, virus-like particles (VLPs) are composed of the structural unprocessed proteins Gag and Gag-Pol, and also contain the host initiator methionine tRNA (tRNA(i)-Met) which serves as a primer for minus-strand DNA synthesis, and a dimer of genomic Ty RNA. Processing of the polyproteins occurs within the particle and proceeds by an ordered pathway, called maturation. First, the protease (PR) is released by autocatalytic cleavage of the Gag-Pol polyprotein, and this cleavage is a prerequisite for subsequent processing at the remaining sites to release the mature structural and catalytic proteins. Maturation takes place prior to the RT reaction and is required to produce transposition-competent VLPs.

It localises to the cytoplasm. The protein resides in the nucleus. It carries out the reaction DNA(n) + a 2'-deoxyribonucleoside 5'-triphosphate = DNA(n+1) + diphosphate. It catalyses the reaction Endonucleolytic cleavage to 5'-phosphomonoester.. Its function is as follows. Capsid protein (CA) is the structural component of the virus-like particle (VLP), forming the shell that encapsulates the retrotransposons dimeric RNA genome. The particles are assembled from trimer-clustered units and there are holes in the capsid shells that allow for the diffusion of macromolecules. CA also has nucleocapsid-like chaperone activity, promoting primer tRNA(i)-Met annealing to the multipartite primer-binding site (PBS), dimerization of Ty2 RNA and initiation of reverse transcription. In terms of biological role, the aspartyl protease (PR) mediates the proteolytic cleavages of the Gag and Gag-Pol polyproteins after assembly of the VLP. Reverse transcriptase/ribonuclease H (RT) is a multifunctional enzyme that catalyzes the conversion of the retro-elements RNA genome into dsDNA within the VLP. The enzyme displays a DNA polymerase activity that can copy either DNA or RNA templates, and a ribonuclease H (RNase H) activity that cleaves the RNA strand of RNA-DNA heteroduplexes during plus-strand synthesis and hydrolyzes RNA primers. The conversion leads to a linear dsDNA copy of the retrotransposon that includes long terminal repeats (LTRs) at both ends. Functionally, integrase (IN) targets the VLP to the nucleus, where a subparticle preintegration complex (PIC) containing at least integrase and the newly synthesized dsDNA copy of the retrotransposon must transit the nuclear membrane. Once in the nucleus, integrase performs the integration of the dsDNA into the host genome. This is Transposon Ty2-LR2 Gag-Pol polyprotein (TY2B-LR2) from Saccharomyces cerevisiae (strain ATCC 204508 / S288c) (Baker's yeast).